Here is a 68-residue protein sequence, read N- to C-terminus: Tabimmunregulin 12 (68 aa).

A signal peptide spans 1–24 (MLFKSYVYFLAGLLLVGLFTSCDA). A propeptide spanning residues 25 to 38 (DAQYEELVPGFFRK) is cleaved from the precursor.

In terms of tissue distribution, expressed in salivary glands.

It is found in the secreted. Horsefly salivary gland immunosuppressant protein that likely inhibits the host inflammatory response by regulation of anti- and pro-inflammatory cytokines. When tested on mouse splenocytes in the presence of LPS, it increases the secretion of the proinflammatory cytokine interleukin-10 (IL10) and decreases the secretion of the proinflammatory cytokine interferon-gamma (IFNG) in a dose-dependent manner. The protein is Tabimmunregulin 12 of Tabanus yao (Horsefly).